The chain runs to 469 residues: Light-independent protochlorophyllide reductase subunit N (469 aa).

Cys24, Cys49, and Cys109 together coordinate [4Fe-4S] cluster.

This sequence belongs to the BchN/ChlN family. As to quaternary structure, protochlorophyllide reductase is composed of three subunits; ChlL, ChlN and ChlB. Forms a heterotetramer of two ChlB and two ChlN subunits. The cofactor is [4Fe-4S] cluster.

The catalysed reaction is chlorophyllide a + oxidized 2[4Fe-4S]-[ferredoxin] + 2 ADP + 2 phosphate = protochlorophyllide a + reduced 2[4Fe-4S]-[ferredoxin] + 2 ATP + 2 H2O. It functions in the pathway porphyrin-containing compound metabolism; chlorophyll biosynthesis (light-independent). Its function is as follows. Component of the dark-operative protochlorophyllide reductase (DPOR) that uses Mg-ATP and reduced ferredoxin to reduce ring D of protochlorophyllide (Pchlide) to form chlorophyllide a (Chlide). This reaction is light-independent. The NB-protein (ChlN-ChlB) is the catalytic component of the complex. The protein is Light-independent protochlorophyllide reductase subunit N of Synechocystis sp. (strain ATCC 27184 / PCC 6803 / Kazusa).